Consider the following 238-residue polypeptide: Probable 2-phosphosulfolactate phosphatase (238 aa).

It belongs to the ComB family. Mg(2+) serves as cofactor.

It catalyses the reaction (2R)-O-phospho-3-sulfolactate + H2O = (2R)-3-sulfolactate + phosphate. This is Probable 2-phosphosulfolactate phosphatase from Clostridium beijerinckii (strain ATCC 51743 / NCIMB 8052) (Clostridium acetobutylicum).